Consider the following 216-residue polypeptide: tRNA (guanine-N(7)-)-methyltransferase (216 aa).

Residues Glu-43, Asp-68, Asn-95, and Asn-117 each coordinate S-adenosyl-L-methionine. Residues Asp-153 and 190–193 (TEYE) contribute to the substrate site.

The protein belongs to the class I-like SAM-binding methyltransferase superfamily. TrmB family.

It carries out the reaction guanosine(46) in tRNA + S-adenosyl-L-methionine = N(7)-methylguanosine(46) in tRNA + S-adenosyl-L-homocysteine. Its pathway is tRNA modification; N(7)-methylguanine-tRNA biosynthesis. In terms of biological role, catalyzes the formation of N(7)-methylguanine at position 46 (m7G46) in tRNA. This chain is tRNA (guanine-N(7)-)-methyltransferase, found in Desulfitobacterium hafniense (strain Y51).